The following is a 318-amino-acid chain: NADH-ubiquinone oxidoreductase chain 1 (318 aa).

9 helical membrane-spanning segments follow: residues 2-22 (FLMNILCLVIPILLAMAFLTL), 37-57 (PNIVGPYGLLQPIADAIKLFI), 69-89 (LMFTLAPTLAFTLALSLWIPM), 100-120 (LGVLFILALSSLAVYSILWSG), 136-156 (VAQTISYEVTLAIILLSIMMM), 171-191 (HMWLIFPLWPLAMMWFISTLA), 231-251 (IIMMNALTTTLFLGAFHNPLF), 253-273 (ELFTVNFITKTLILTMMFLWV), and 293-313 (FLPLTLALCMFHVSMPALSAG).

This sequence belongs to the complex I subunit 1 family. As to quaternary structure, core subunit of respiratory chain NADH dehydrogenase (Complex I) which is composed of 45 different subunits.

It is found in the mitochondrion inner membrane. It carries out the reaction a ubiquinone + NADH + 5 H(+)(in) = a ubiquinol + NAD(+) + 4 H(+)(out). Its function is as follows. Core subunit of the mitochondrial membrane respiratory chain NADH dehydrogenase (Complex I) which catalyzes electron transfer from NADH through the respiratory chain, using ubiquinone as an electron acceptor. Essential for the catalytic activity and assembly of complex I. The protein is NADH-ubiquinone oxidoreductase chain 1 (MT-ND1) of Euphractus sexcinctus (Six-banded armadillo).